The following is a 390-amino-acid chain: Anhydro-N-acetylmuramic acid kinase (390 aa).

9 to 16 provides a ligand contact to ATP; that stretch reads GTSLDGID.

It belongs to the anhydro-N-acetylmuramic acid kinase family.

The catalysed reaction is 1,6-anhydro-N-acetyl-beta-muramate + ATP + H2O = N-acetyl-D-muramate 6-phosphate + ADP + H(+). The protein operates within amino-sugar metabolism; 1,6-anhydro-N-acetylmuramate degradation. It functions in the pathway cell wall biogenesis; peptidoglycan recycling. Catalyzes the specific phosphorylation of 1,6-anhydro-N-acetylmuramic acid (anhMurNAc) with the simultaneous cleavage of the 1,6-anhydro ring, generating MurNAc-6-P. Is required for the utilization of anhMurNAc either imported from the medium or derived from its own cell wall murein, and thus plays a role in cell wall recycling. The chain is Anhydro-N-acetylmuramic acid kinase from Bacillus cereus (strain B4264).